The following is a 186-amino-acid chain: UPF0200 protein Hbut_0338 (186 aa).

13-20 (GMPGSGKS) is a binding site for ATP.

This sequence belongs to the UPF0200 family.

The chain is UPF0200 protein Hbut_0338 from Hyperthermus butylicus (strain DSM 5456 / JCM 9403 / PLM1-5).